A 113-amino-acid polypeptide reads, in one-letter code: UPF0339 protein MS1092 (113 aa).

2 tandem repeats follow at residues 11–59 and 62–110.

This sequence belongs to the UPF0339 family. Duplicated subfamily.

This chain is UPF0339 protein MS1092, found in Mannheimia succiniciproducens (strain KCTC 0769BP / MBEL55E).